The following is a 309-amino-acid chain: Ribonuclease Z (309 aa).

Residues His61, His63, Asp65, His66, His144, Asp212, and His271 each coordinate Zn(2+). Asp65 serves as the catalytic Proton acceptor.

The protein belongs to the RNase Z family. Homodimer. Zn(2+) is required as a cofactor.

It catalyses the reaction Endonucleolytic cleavage of RNA, removing extra 3' nucleotides from tRNA precursor, generating 3' termini of tRNAs. A 3'-hydroxy group is left at the tRNA terminus and a 5'-phosphoryl group is left at the trailer molecule.. Zinc phosphodiesterase, which displays some tRNA 3'-processing endonuclease activity. Probably involved in tRNA maturation, by removing a 3'-trailer from precursor tRNA. The sequence is that of Ribonuclease Z from Clostridium acetobutylicum (strain ATCC 824 / DSM 792 / JCM 1419 / IAM 19013 / LMG 5710 / NBRC 13948 / NRRL B-527 / VKM B-1787 / 2291 / W).